The primary structure comprises 129 residues: uncharacterized protein (129 aa).

Topologically, residues M1–E28 are cytoplasmic. A helical transmembrane segment spans residues V29 to V49. The Extracellular portion of the chain corresponds to D50 to R54. Residues S55–S75 form a helical membrane-spanning segment. Residues E76–F129 lie on the Cytoplasmic side of the membrane.

It is found in the membrane. This is an uncharacterized protein from Saccharomyces cerevisiae (strain ATCC 204508 / S288c) (Baker's yeast).